The following is a 201-amino-acid chain: Small ribosomal subunit protein uS4c (201 aa).

The S4 RNA-binding domain occupies 89 to 152; that stretch reads MRLDNILFRL…NSRTLVQNLL (64 aa).

This sequence belongs to the universal ribosomal protein uS4 family. Part of the 30S ribosomal subunit. Contacts protein S5. The interaction surface between S4 and S5 is involved in control of translational fidelity.

The protein resides in the plastid. It is found in the chloroplast. Its function is as follows. One of the primary rRNA binding proteins, it binds directly to 16S rRNA where it nucleates assembly of the body of the 30S subunit. Functionally, with S5 and S12 plays an important role in translational accuracy. This Arabidopsis thaliana (Mouse-ear cress) protein is Small ribosomal subunit protein uS4c (rps4).